The following is a 62-amino-acid chain: MARCRRHSRSRSRSRNQCQRRRRRHYNRRRTYRRSRRHSRRRRVRRRGCSCRRCSRRRRRRC.

The segment at 1-46 is disordered; sequence MARCRRHSRSRSRSRNQCQRRRRRHYNRRRTYRRSRRHSRRRRVRR.

It belongs to the protamine P1 family. In terms of tissue distribution, testis.

The protein resides in the nucleus. It localises to the chromosome. Its function is as follows. Protamines substitute for histones in the chromatin of sperm during the haploid phase of spermatogenesis. They compact sperm DNA into a highly condensed, stable and inactive complex. This Planigale gilesi (Flat-skulled marsupial mouse) protein is Sperm protamine P1 (PRM1).